We begin with the raw amino-acid sequence, 503 residues long: Lanosterol 14-alpha demethylase (503 aa).

Residues 24–44 traverse the membrane as a helical segment; sequence GNLLSTLLIACAFTLSLVYLF. A heme-binding site is contributed by cysteine 449.

The protein belongs to the cytochrome P450 family. It depends on heme as a cofactor. Ubiquitinated by MARCHF6, leading to proteasomal degradation.

It localises to the endoplasmic reticulum membrane. It is found in the microsome membrane. It catalyses the reaction a 14alpha-methyl steroid + 3 reduced [NADPH--hemoprotein reductase] + 3 O2 = a Delta(14) steroid + formate + 3 oxidized [NADPH--hemoprotein reductase] + 4 H2O + 4 H(+). The enzyme catalyses lanosterol + 3 reduced [NADPH--hemoprotein reductase] + 3 O2 = 4,4-dimethyl-5alpha-cholesta-8,14,24-trien-3beta-ol + formate + 3 oxidized [NADPH--hemoprotein reductase] + 4 H2O + 4 H(+). It carries out the reaction 24,25-dihydrolanosterol + 3 reduced [NADPH--hemoprotein reductase] + 3 O2 = 4,4-dimethyl-8,14-cholestadien-3beta-ol + formate + 3 oxidized [NADPH--hemoprotein reductase] + 4 H2O + 4 H(+). The catalysed reaction is a 14alpha-methyl steroid + reduced [NADPH--hemoprotein reductase] + O2 = a 14alpha-hydroxymethyl steroid + oxidized [NADPH--hemoprotein reductase] + H2O + H(+). It catalyses the reaction a 14alpha-hydroxymethyl steroid + reduced [NADPH--hemoprotein reductase] + O2 = a 14alpha-formyl steroid + oxidized [NADPH--hemoprotein reductase] + 2 H2O + H(+). The enzyme catalyses a 14alpha-formyl steroid + reduced [NADPH--hemoprotein reductase] + O2 = a Delta(14) steroid + formate + oxidized [NADPH--hemoprotein reductase] + H2O + 2 H(+). It carries out the reaction lanosterol + reduced [NADPH--hemoprotein reductase] + O2 = 32-hydroxylanosterol + oxidized [NADPH--hemoprotein reductase] + H2O + H(+). The catalysed reaction is 32-hydroxylanosterol + reduced [NADPH--hemoprotein reductase] + O2 = 32-oxolanosterol + oxidized [NADPH--hemoprotein reductase] + 2 H2O + H(+). It catalyses the reaction 32-oxolanosterol + reduced [NADPH--hemoprotein reductase] + O2 = 4,4-dimethyl-5alpha-cholesta-8,14,24-trien-3beta-ol + formate + oxidized [NADPH--hemoprotein reductase] + H2O + 2 H(+). The enzyme catalyses 24,25-dihydrolanosterol + reduced [NADPH--hemoprotein reductase] + O2 = 32-hydroxy-24,25-dihydrolanosterol + oxidized [NADPH--hemoprotein reductase] + H2O + H(+). It carries out the reaction 32-hydroxy-24,25-dihydrolanosterol + reduced [NADPH--hemoprotein reductase] + O2 = 32-oxo-24,25-dihydrolanosterol + oxidized [NADPH--hemoprotein reductase] + 2 H2O + H(+). The catalysed reaction is 32-oxo-24,25-dihydrolanosterol + reduced [NADPH--hemoprotein reductase] + O2 = 4,4-dimethyl-8,14-cholestadien-3beta-ol + formate + oxidized [NADPH--hemoprotein reductase] + H2O + 2 H(+). It functions in the pathway steroid biosynthesis; zymosterol biosynthesis; zymosterol from lanosterol: step 1/6. Inhibited by azalanstat. Inhibited by azole antifungal agents ketoconazole, itraconazole and fluconazole. Functionally, sterol 14alpha-demethylase that plays a critical role in the cholesterol biosynthesis pathway, being cholesterol the major sterol component in mammalian membranes as well as a precursor for bile acid and steroid hormone synthesis. Cytochrome P450 monooxygenase that catalyzes the three-step oxidative removal of the 14alpha-methyl group (C-32) of sterols such as lanosterol (lanosta-8,24-dien-3beta-ol) and 24,25-dihydrolanosterol (DHL) in the form of formate, and converts the sterols to 4,4-dimethyl-5alpha-cholesta-8,14,24-trien-3beta-ol and 4,4-dimethyl-8,14-cholestadien-3beta-ol, respectively, which are intermediates of cholesterol biosynthesis. Can also demethylate substrates not intrinsic to mammals, such as eburicol (24-methylene-24,25-dihydrolanosterol), but at a lower rate than DHL. The polypeptide is Lanosterol 14-alpha demethylase (Mus musculus (Mouse)).